Here is a 166-residue protein sequence, read N- to C-terminus: Anaerobic nitrite reductase NSHB1 (166 aa).

The region spanning 13-163 is the Globin domain; the sequence is SFSEEQEALV…LVAAIKQEMK (151 aa). The Homodimerization signature appears at 46 to 50; it reads EVAPS. The heme b site is built by Ser-56, Lys-70, His-74, Arg-104, Thr-108, and His-109. Positions 116 to 128 match the Homodimerization motif; the sequence is DAHFEVVKFALLD.

Belongs to the plant globin family. Homodimer. Heme b is required as a cofactor. In terms of tissue distribution, expressed in coleoptiles, embryos, leaves, seminal roots and roots.

It localises to the cytoplasm. The protein resides in the nucleus. The enzyme catalyses Fe(III)-heme b-[protein] + nitric oxide + H2O = Fe(II)-heme b-[protein] + nitrite + 2 H(+). With respect to regulation, slowly reduced by ascorbic acid (AA); this reaction may become a source of nitric oxide (NO) during hypoxia. Functionally, phytoglobin that reduces nitrite to nitric oxide under anoxic conditions (e.g. during flooding or in waterlogged soil). May not function as an oxygen storage or transport protein. Has an unusually high affinity for O(2) through a hexacoordinate heme iron because of a very low dissociation constant. This is Anaerobic nitrite reductase NSHB1 from Oryza sativa subsp. japonica (Rice).